The sequence spans 297 residues: Protease HtpX homolog (297 aa).

A run of 2 helical transmembrane segments spans residues 14–34 (IVLLFVFFILVALVGAAVGYL) and 38–58 (SLETGVVAAIVIGAIYTIIMV). Zn(2+) is bound at residue His-144. Glu-145 is an active-site residue. Zn(2+) is bound at residue His-148. Transmembrane regions (helical) follow at residues 159-179 (IALALAAAITLLTNIGGNWWF) and 199-219 (ILLLVFSILMMVLAPLAAAAI). Zn(2+) is bound at residue Glu-228.

This sequence belongs to the peptidase M48B family. Zn(2+) is required as a cofactor.

The protein localises to the cell membrane. This chain is Protease HtpX homolog, found in Leuconostoc mesenteroides subsp. mesenteroides (strain ATCC 8293 / DSM 20343 / BCRC 11652 / CCM 1803 / JCM 6124 / NCDO 523 / NBRC 100496 / NCIMB 8023 / NCTC 12954 / NRRL B-1118 / 37Y).